Here is a 235-residue protein sequence, read N- to C-terminus: Chalcone--flavanone isomerase 2 (235 aa).

Residues Thr-50 and Ser-192 each coordinate substrate.

This sequence belongs to the chalcone isomerase family.

It carries out the reaction a chalcone = a flavanone.. The protein operates within secondary metabolite biosynthesis; flavonoid biosynthesis. Its function is as follows. Catalyzes the intramolecular cyclization of bicyclic chalcones into tricyclic (S)-flavanones. Responsible for the isomerization of 4,2',4',6'-tetrahydroxychalcone (also termed chalcone) into naringenin. This Chrysanthemum morifolium (Florist's daisy) protein is Chalcone--flavanone isomerase 2 (CHI2).